The primary structure comprises 317 residues: Ciliary microtubule inner protein 2A (317 aa).

A disordered region spans residues 131–153; sequence TPDTPHPPCPPGRKGDSRDLGHP.

It belongs to the CIMIP2 family. Microtubule inner protein component of sperm flagellar doublet microtubules.

The protein localises to the cytoplasm. Its subcellular location is the cytoskeleton. It localises to the flagellum axoneme. Microtubule inner protein (MIP) part of the dynein-decorated doublet microtubules (DMTs) in flagellum axoneme. Binds to the intra-tubulin interfaces. The sequence is that of Ciliary microtubule inner protein 2A from Homo sapiens (Human).